A 455-amino-acid polypeptide reads, in one-letter code: GTPase Der (455 aa).

2 consecutive EngA-type G domains span residues P4–D169 and I178–R353. Residues G10–S17, D57–L61, N120–E123, G184–S191, D231–I235, and N296–D299 each bind GTP. In terms of domain architecture, KH-like spans R354–Q439.

The protein belongs to the TRAFAC class TrmE-Era-EngA-EngB-Septin-like GTPase superfamily. EngA (Der) GTPase family. In terms of assembly, associates with the 50S ribosomal subunit.

Functionally, GTPase that plays an essential role in the late steps of ribosome biogenesis. This is GTPase Der from Parasynechococcus marenigrum (strain WH8102).